The chain runs to 353 residues: Chemerin-like receptor 2 (353 aa).

At 1-41 the chain is on the extracellular side; sequence MEVSREMLFEELDNYSYALEYYSQEPDAEENVYPGIVHWIS. An N-linked (GlcNAc...) asparagine glycan is attached at Asn14. Residues 42-62 form a helical membrane-spanning segment; that stretch reads LLLYALAFVLGIPGNAIVIWF. At 63 to 73 the chain is on the cytoplasmic side; it reads MGFKWKKTVTT. The helical transmembrane segment at 74-94 threads the bilayer; it reads LWFLNLAIADFVFVLFLPLYI. At 95 to 112 the chain is on the extracellular side; sequence SYVALSFHWPFGRWLCKL. Cys110 and Cys187 are joined by a disulfide. A helical membrane pass occupies residues 113 to 133; that stretch reads NSFIAQLNMFSSVFFLTVISL. Topologically, residues 134 to 154 are cytoplasmic; that stretch reads DRYIHLIHPGLSHPHRTLKNS. Residues 155–175 form a helical membrane-spanning segment; that stretch reads LLVVLFVWLLASLLGGPTLYF. The Extracellular portion of the chain corresponds to 176-210; it reads RDTVEVNNRIICYNNFQEYELTLMRHHVLTWVKFL. The helical transmembrane segment at 211-231 threads the bilayer; sequence FGYLLPLLTMSSCYLCLIFKT. The Cytoplasmic portion of the chain corresponds to 232 to 247; the sequence is KKQNILISSKHLWMIL. A helical membrane pass occupies residues 248-268; the sequence is SVVIAFMVCWTPFHLFSIWEL. Residues 269 to 286 lie on the Extracellular side of the membrane; sequence SIHHNSSFQNVLQGGIPL. Residues 287-307 form a helical membrane-spanning segment; sequence STGLAFLNSCLNPILYVLISK. Residues 308–353 are Cytoplasmic-facing; the sequence is KFQARFRASVAEVLKRSLWEASCSGTVSEQLRSAETKSLSLLETAQ.

Belongs to the chemokine-like receptor (CMKLR) family.

It is found in the cell membrane. In terms of biological role, receptor for chemoattractant adipokine chemerin/RARRES2 suggesting a role for this receptor in the regulation of inflammation and energy homesotasis. Signals mainly via beta-arrestin pathway. Binding of RARRES2 activates weakly G proteins, calcium mobilization and MAPK1/MAPK3 (ERK1/2) phosphorylation too. Acts also as a receptor for TAFA1, mediates its effects on neuronal stem-cell proliferation and differentiation via the activation of ROCK/ERK and ROCK/STAT3 signaling pathway. This chain is Chemerin-like receptor 2 (Cmklr2), found in Rattus norvegicus (Rat).